Consider the following 302-residue polypeptide: MKRDVLSITDLSREEIYELLESAADLKKKRKAGEPTEYLKHKSLGMIFEKSSTRTRVSFEVAMSDFGGHALYLNSRDIQVGRGETIEDTARTLSGYLHGIMARVMSHDTVEKLARFSTIPVINALSDREHPCQILGDFMTIMEYKNRFEGLKFAWIGDGNNVCNSALLGSAIMGMEFVIACPEGYEPGAEFLEKAKALGGKFSITDDPKTAAKDADIIYTDVWVSMGDEAEQEKRLKDFGSFQVNTELLGVAKPDVIVMHCLPARRGLEITDEVMDGPNSVIFEEAENRLHAQKALILKLMR.

Carbamoyl phosphate is bound by residues S52–T55, Q79, R103, and H130–Q133. L-ornithine-binding positions include N161, D221, and S225–M226. Carbamoyl phosphate-binding positions include C261–L262 and R289.

The protein belongs to the aspartate/ornithine carbamoyltransferase superfamily. OTCase family.

The protein localises to the cytoplasm. The catalysed reaction is carbamoyl phosphate + L-ornithine = L-citrulline + phosphate + H(+). It participates in amino-acid biosynthesis; L-arginine biosynthesis; L-arginine from L-ornithine and carbamoyl phosphate: step 1/3. In terms of biological role, reversibly catalyzes the transfer of the carbamoyl group from carbamoyl phosphate (CP) to the N(epsilon) atom of ornithine (ORN) to produce L-citrulline. In Methanosarcina mazei (strain ATCC BAA-159 / DSM 3647 / Goe1 / Go1 / JCM 11833 / OCM 88) (Methanosarcina frisia), this protein is Ornithine carbamoyltransferase.